We begin with the raw amino-acid sequence, 259 residues long: Thiazole synthase (259 aa).

The Schiff-base intermediate with DXP role is filled by K95. Residues G156, 183–184 (AG), and 205–206 (NS) contribute to the 1-deoxy-D-xylulose 5-phosphate site.

It belongs to the ThiG family. As to quaternary structure, homotetramer. Forms heterodimers with either ThiH or ThiS.

It localises to the cytoplasm. It carries out the reaction [ThiS sulfur-carrier protein]-C-terminal-Gly-aminoethanethioate + 2-iminoacetate + 1-deoxy-D-xylulose 5-phosphate = [ThiS sulfur-carrier protein]-C-terminal Gly-Gly + 2-[(2R,5Z)-2-carboxy-4-methylthiazol-5(2H)-ylidene]ethyl phosphate + 2 H2O + H(+). It functions in the pathway cofactor biosynthesis; thiamine diphosphate biosynthesis. In terms of biological role, catalyzes the rearrangement of 1-deoxy-D-xylulose 5-phosphate (DXP) to produce the thiazole phosphate moiety of thiamine. Sulfur is provided by the thiocarboxylate moiety of the carrier protein ThiS. In vitro, sulfur can be provided by H(2)S. This Coxiella burnetii (strain RSA 331 / Henzerling II) protein is Thiazole synthase.